Here is a 406-residue protein sequence, read N- to C-terminus: UPF0754 membrane protein CYA_0973 (406 aa).

Helical transmembrane passes span 1–21 (MALW…YFTN) and 385–405 (IVNL…LFLL).

The protein belongs to the UPF0754 family.

The protein localises to the cell inner membrane. In Synechococcus sp. (strain JA-3-3Ab) (Cyanobacteria bacterium Yellowstone A-Prime), this protein is UPF0754 membrane protein CYA_0973.